We begin with the raw amino-acid sequence, 519 residues long: Glutamate--cysteine ligase (519 aa).

This sequence belongs to the glutamate--cysteine ligase type 1 family. Type 1 subfamily.

The catalysed reaction is L-cysteine + L-glutamate + ATP = gamma-L-glutamyl-L-cysteine + ADP + phosphate + H(+). It participates in sulfur metabolism; glutathione biosynthesis; glutathione from L-cysteine and L-glutamate: step 1/2. This is Glutamate--cysteine ligase from Edwardsiella ictaluri (strain 93-146).